A 676-amino-acid polypeptide reads, in one-letter code: Zinc finger CCCH domain-containing protein 38 (676 aa).

5 disordered regions span residues 1–134 (MEMS…DHLF), 172–217 (SSDY…RSSN), 245–307 (RKQP…SWID), 487–506 (SVQP…NPNQ), and 533–594 (IQEV…DPKG). Residues 12–21 (SKWDSKEDTH) show a composition bias toward basic and acidic residues. Over residues 58-79 (RVSQNNDNSYFSEQDGTRQQFV) the composition is skewed to polar residues. 3 stretches are compositionally biased toward basic and acidic residues: residues 101–110 (ARRDAGSYDR), 124–134 (EFNKRGSDHLF), and 192–212 (SEFT…EGGF). The C3H1-type zinc-finger motif lies at 214–243 (RSSNIPCKFFAAGTGFCRNGKYCRFSHHVA). The span at 251-262 (NNNNFYRQDNNN) shows a compositional bias: low complexity. The span at 269–278 (KWNDVERLDN) shows a compositional bias: basic and acidic residues. The span at 538–562 (LDPKENGDKKTDEASKEEEGKKTGE) shows a compositional bias: basic and acidic residues. Residues 563 to 583 (DTNDAENVVDEDEDGDDDGSD) are compositionally biased toward acidic residues. The span at 584 to 594 (EENKKEKDPKG) shows a compositional bias: basic and acidic residues.

The protein is Zinc finger CCCH domain-containing protein 38 of Arabidopsis thaliana (Mouse-ear cress).